The following is a 447-amino-acid chain: N-succinylarginine dihydrolase (447 aa).

Residues 19 to 28 (AGLSVGNKAS), asparagine 110, and 137 to 138 (HR) contribute to the substrate site. Glutamate 174 is a catalytic residue. Position 213 (arginine 213) interacts with substrate. The active site involves histidine 249. Substrate-binding residues include aspartate 251 and asparagine 365. The active-site Nucleophile is the cysteine 371.

It belongs to the succinylarginine dihydrolase family. Homodimer.

The enzyme catalyses N(2)-succinyl-L-arginine + 2 H2O + 2 H(+) = N(2)-succinyl-L-ornithine + 2 NH4(+) + CO2. It participates in amino-acid degradation; L-arginine degradation via AST pathway; L-glutamate and succinate from L-arginine: step 2/5. Its function is as follows. Catalyzes the hydrolysis of N(2)-succinylarginine into N(2)-succinylornithine, ammonia and CO(2). This Photorhabdus laumondii subsp. laumondii (strain DSM 15139 / CIP 105565 / TT01) (Photorhabdus luminescens subsp. laumondii) protein is N-succinylarginine dihydrolase.